The sequence spans 228 residues: Ribose-5-phosphate isomerase A (228 aa).

Residues 29-32, 85-88, and 98-101 contribute to the substrate site; these read TGST, DGAD, and KGGG. Glutamate 107 functions as the Proton acceptor in the catalytic mechanism. Lysine 125 provides a ligand contact to substrate.

The protein belongs to the ribose 5-phosphate isomerase family. As to quaternary structure, homodimer.

It catalyses the reaction aldehydo-D-ribose 5-phosphate = D-ribulose 5-phosphate. It participates in carbohydrate degradation; pentose phosphate pathway; D-ribose 5-phosphate from D-ribulose 5-phosphate (non-oxidative stage): step 1/1. Its function is as follows. Catalyzes the reversible conversion of ribose-5-phosphate to ribulose 5-phosphate. The chain is Ribose-5-phosphate isomerase A from Staphylococcus aureus (strain COL).